A 180-amino-acid chain; its full sequence is 3-hydroxyanthranilate 3,4-dioxygenase (180 aa).

Arg-46 lines the O2 pocket. Fe cation is bound by residues His-50, Glu-56, and His-94. Glu-56 is a substrate binding site. Arg-98 and Glu-109 together coordinate substrate. Fe cation-binding residues include Cys-124, Cys-127, Cys-161, and Cys-164.

It belongs to the 3-HAO family. Homodimer. Fe(2+) serves as cofactor.

The catalysed reaction is 3-hydroxyanthranilate + O2 = (2Z,4Z)-2-amino-3-carboxymuconate 6-semialdehyde. It functions in the pathway cofactor biosynthesis; NAD(+) biosynthesis; quinolinate from L-kynurenine: step 3/3. Functionally, catalyzes the oxidative ring opening of 3-hydroxyanthranilate to 2-amino-3-carboxymuconate semialdehyde, which spontaneously cyclizes to quinolinate. This is 3-hydroxyanthranilate 3,4-dioxygenase from Ruegeria pomeroyi (strain ATCC 700808 / DSM 15171 / DSS-3) (Silicibacter pomeroyi).